The sequence spans 179 residues: Large ribosomal subunit protein uL5 (179 aa).

The protein belongs to the universal ribosomal protein uL5 family. In terms of assembly, part of the 50S ribosomal subunit; part of the 5S rRNA/L5/L18/L25 subcomplex. Contacts the 5S rRNA and the P site tRNA. Forms a bridge to the 30S subunit in the 70S ribosome.

In terms of biological role, this is one of the proteins that bind and probably mediate the attachment of the 5S RNA into the large ribosomal subunit, where it forms part of the central protuberance. In the 70S ribosome it contacts protein S13 of the 30S subunit (bridge B1b), connecting the 2 subunits; this bridge is implicated in subunit movement. Contacts the P site tRNA; the 5S rRNA and some of its associated proteins might help stabilize positioning of ribosome-bound tRNAs. The chain is Large ribosomal subunit protein uL5 from Pseudomonas aeruginosa (strain LESB58).